The sequence spans 217 residues: Ras-related protein RGP2 (217 aa).

GTP contacts are provided by residues 19–26 (GDSGVGKS), 67–71 (DTAGQ), and 125–128 (NKSD). 2 S-geranylgeranyl cysteine lipidation sites follow: Cys214 and Cys215.

This sequence belongs to the small GTPase superfamily. Rab family.

The protein resides in the cell membrane. The sequence is that of Ras-related protein RGP2 (RGP2) from Oryza sativa subsp. japonica (Rice).